Reading from the N-terminus, the 300-residue chain is Protoheme IX farnesyltransferase 1 (300 aa).

9 helical membrane passes run V28–L48, V54–I74, A100–N120, L122–L142, N149–T169, A176–I196, C222–M242, S243–W263, and F280–A300.

It belongs to the UbiA prenyltransferase family. Protoheme IX farnesyltransferase subfamily.

It localises to the cell inner membrane. The enzyme catalyses heme b + (2E,6E)-farnesyl diphosphate + H2O = Fe(II)-heme o + diphosphate. The protein operates within porphyrin-containing compound metabolism; heme O biosynthesis; heme O from protoheme: step 1/1. Its function is as follows. Converts heme B (protoheme IX) to heme O by substitution of the vinyl group on carbon 2 of heme B porphyrin ring with a hydroxyethyl farnesyl side group. The protein is Protoheme IX farnesyltransferase 1 of Shewanella sp. (strain MR-4).